A 165-amino-acid polypeptide reads, in one-letter code: Protein SprT (165 aa).

Residues 20 to 162 enclose the SprT-like domain; it reads EKLAQANLKL…YRCVHCGEQL (143 aa). H78 lines the Zn(2+) pocket. The active site involves E79. H82 provides a ligand contact to Zn(2+).

This sequence belongs to the SprT family. The cofactor is Zn(2+).

Its subcellular location is the cytoplasm. The sequence is that of Protein SprT from Escherichia coli (strain SMS-3-5 / SECEC).